A 556-amino-acid polypeptide reads, in one-letter code: Glutamine--tRNA ligase (556 aa).

The short motif at 34–44 is the 'HIGH' region element; that stretch reads PEPNGYLHIGH. ATP contacts are provided by residues 35–37 and 41–47; these read EPN and HIGHAKS. Positions 67 and 212 each coordinate L-glutamine. ATP contacts are provided by residues Thr-231, 261-262, and 269-271; these read RL and MSK. Residues 268-272 carry the 'KMSKS' region motif; the sequence is VMSKR.

The protein belongs to the class-I aminoacyl-tRNA synthetase family. As to quaternary structure, monomer.

The protein localises to the cytoplasm. It catalyses the reaction tRNA(Gln) + L-glutamine + ATP = L-glutaminyl-tRNA(Gln) + AMP + diphosphate. The chain is Glutamine--tRNA ligase from Vibrio vulnificus (strain YJ016).